Here is a 556-residue protein sequence, read N- to C-terminus: Olefin beta-lactone synthetase (556 aa).

ATP contacts are provided by residues 187–195, 321–326, aspartate 430, and arginine 445; these read TSGSTGVPK and TPYGAT.

It belongs to the ATP-dependent AMP-binding enzyme family. In terms of assembly, monomer. Forms a complex with OleB and OleD.

The protein resides in the cytoplasm. The enzyme catalyses a (2R,3S)-2-alkyl-3-hydroxyalkanoate + ATP = a cis-3-alkyl-4-alkyloxetan-2-one + AMP + diphosphate. In terms of biological role, involved in olefin biosynthesis. Catalyzes the conversion of 2-alkyl-3-hydroxyalkanoic acids to beta-lactones in the presence of ATP. This Xanthomonas campestris pv. campestris (strain ATCC 33913 / DSM 3586 / NCPPB 528 / LMG 568 / P 25) protein is Olefin beta-lactone synthetase.